Here is a 391-residue protein sequence, read N- to C-terminus: Zinc finger protein 414 (391 aa).

A disordered region spans residues 1–110 (MDEEPSGPSL…RRPPPGKQIP (110 aa)). Residues 84 to 93 (GPTSTVSGTS) show a composition bias toward polar residues. C2H2-type zinc fingers lie at residues 109-133 (IPCSSPGCCLSFPSVRDLAQHLRTH), 145-169 (FRCSALSCTETFPNMQELVAHGKLH), and 176-201 (FKCENCLLRIRTHRSLFKHLHVCAEH). Disordered regions lie at residues 201–243 (HAQS…LEPF), 274–312 (LAAAPGPPASSAAVWKKSQGAGGSPRRPQGGSDAPSGHA), and 344–391 (HLED…FSPL). Positions 214 to 226 (LDRESPASERPPE) are enriched in basic and acidic residues. Residues 227 to 236 (SDPAPAPGLP) are compositionally biased toward pro residues. Residues 274 to 286 (LAAAPGPPASSAA) show a composition bias toward low complexity. The segment at 326 to 348 (YSCMQCAFSTASRPAMTLHLEDH) adopts a C2H2-type 4 zinc-finger fold. Residues 353–372 (PAAPAPGQPRPDAPADPAPL) show a composition bias toward pro residues.

This sequence belongs to the krueppel C2H2-type zinc-finger protein family.

It localises to the nucleus. Its function is as follows. May be involved in transcriptional regulation. This chain is Zinc finger protein 414 (ZNF414), found in Bos taurus (Bovine).